The following is a 791-amino-acid chain: mRNA 3'-end-processing protein RNA14 (791 aa).

HAT repeat units follow at residues 44-76, 78-112, 119-154, 165-198, 231-263, and 273-305; these read DNQE…YELN, DEKE…GVTD, KARG…FLQS, QKID…WENE, KSLK…LEKE, and VNDK…YLLV. Basic and acidic residues predominate over residues 379–388; sequence IDPATDKDNI. 2 disordered regions span residues 379-449 and 725-745; these read IDPA…APSS and QKTR…KPEE. The segment covering 389 to 411 has biased composition (acidic residues); it reads QEDDDDNEEEEEEENDNDNDNDN. The span at 427–442 shows a compositional bias: low complexity; sequence NPNGGQNGSNSENNGE.

The protein localises to the nucleus. The protein resides in the cytoplasm. Its function is as follows. Component of the cleavage factor IA (CFIA) complex, which is involved in the endonucleolytic cleavage during polyadenylation-dependent pre-mRNA 3'-end formation. In Candida albicans (strain SC5314 / ATCC MYA-2876) (Yeast), this protein is mRNA 3'-end-processing protein RNA14 (RNA14).